The primary structure comprises 444 residues: MYRARIRGIYATALTKLALDWGFKVVQPTEKIARRFGLEPDFSPPDITVKDHESKTGIVAMGLCEAVEAFLSKLTEYADPIVARARARLKEVFVGRAVGEATVEGPGGEVFDVPRRYVLTPGATGIYTVVRPPIGPLKGVAAPEIVVEGQYVELNTTGRVSYSEHIPAEEAVRLRILAETRLRQYASIGLRFKSSARYAPDDAIAAEAEALYKEMLEISKGGSPGQVLRRGKCFAVVLFDSASKARLDEARAAVVPTVRGHHALRAQGLGKCLDLLDHVGGDVYEKAAEFLAGEAAAVYHVKPWGEVVKMRAEPVGVRGGVLVLRRRLRPGGVLDGIGVKIERGFYALTCVPRGKGYVVHTYYTAEGKAVGTYVNANTVPEWGRRVIYIDLLVDKAFDGGGERVLDLDEYEKYAEMFPQRLRDPLSRLPKTPIWCTEEGIKTVA.

It belongs to the FAU-1 family.

Probable RNase involved in rRNA stability through maturation and/or degradation of precursor rRNAs. Binds to RNA in loop regions with AU-rich sequences. In Pyrobaculum arsenaticum (strain DSM 13514 / JCM 11321 / PZ6), this protein is Probable ribonuclease FAU-1.